Reading from the N-terminus, the 119-residue chain is Nascent polypeptide-associated complex protein (119 aa).

Residues Arg-5–Glu-73 enclose the NAC-A/B domain.

The protein belongs to the NAC-alpha family. Homodimer. Interacts with the ribosome. Binds ribosomal RNA.

In terms of biological role, contacts the emerging nascent chain on the ribosome. The protein is Nascent polypeptide-associated complex protein of Thermoplasma acidophilum (strain ATCC 25905 / DSM 1728 / JCM 9062 / NBRC 15155 / AMRC-C165).